The following is a 208-amino-acid chain: Large ribosomal subunit protein bL25 (208 aa).

This sequence belongs to the bacterial ribosomal protein bL25 family. CTC subfamily. In terms of assembly, part of the 50S ribosomal subunit; part of the 5S rRNA/L5/L18/L25 subcomplex. Contacts the 5S rRNA. Binds to the 5S rRNA independently of L5 and L18.

Functionally, this is one of the proteins that binds to the 5S RNA in the ribosome where it forms part of the central protuberance. The chain is Large ribosomal subunit protein bL25 from Leptothrix cholodnii (strain ATCC 51168 / LMG 8142 / SP-6) (Leptothrix discophora (strain SP-6)).